Here is a 561-residue protein sequence, read N- to C-terminus: Dihydroxy-acid dehydratase (561 aa).

Asp78 contributes to the Mg(2+) binding site. Cys119 is a [2Fe-2S] cluster binding site. The Mg(2+) site is built by Asp120 and Lys121. Lys121 bears the N6-carboxylysine mark. A [2Fe-2S] cluster-binding site is contributed by Cys192. A Mg(2+)-binding site is contributed by Glu448. The active-site Proton acceptor is Ser474.

It belongs to the IlvD/Edd family. In terms of assembly, homodimer. It depends on [2Fe-2S] cluster as a cofactor. The cofactor is Mg(2+).

The catalysed reaction is (2R)-2,3-dihydroxy-3-methylbutanoate = 3-methyl-2-oxobutanoate + H2O. The enzyme catalyses (2R,3R)-2,3-dihydroxy-3-methylpentanoate = (S)-3-methyl-2-oxopentanoate + H2O. It participates in amino-acid biosynthesis; L-isoleucine biosynthesis; L-isoleucine from 2-oxobutanoate: step 3/4. Its pathway is amino-acid biosynthesis; L-valine biosynthesis; L-valine from pyruvate: step 3/4. Functionally, functions in the biosynthesis of branched-chain amino acids. Catalyzes the dehydration of (2R,3R)-2,3-dihydroxy-3-methylpentanoate (2,3-dihydroxy-3-methylvalerate) into 2-oxo-3-methylpentanoate (2-oxo-3-methylvalerate) and of (2R)-2,3-dihydroxy-3-methylbutanoate (2,3-dihydroxyisovalerate) into 2-oxo-3-methylbutanoate (2-oxoisovalerate), the penultimate precursor to L-isoleucine and L-valine, respectively. The protein is Dihydroxy-acid dehydratase of Sulfurimonas denitrificans (strain ATCC 33889 / DSM 1251) (Thiomicrospira denitrificans (strain ATCC 33889 / DSM 1251)).